Reading from the N-terminus, the 291-residue chain is Diaminopimelate epimerase (291 aa).

Positions 13, 46, and 66 each coordinate substrate. The Proton donor role is filled by cysteine 75. Residues 76-77 (GN), asparagine 156, asparagine 189, and 207-208 (ER) contribute to the substrate site. The active-site Proton acceptor is cysteine 216. 217 to 218 (GS) serves as a coordination point for substrate.

The protein belongs to the diaminopimelate epimerase family. Homodimer.

It is found in the cytoplasm. The enzyme catalyses (2S,6S)-2,6-diaminopimelate = meso-2,6-diaminopimelate. Its pathway is amino-acid biosynthesis; L-lysine biosynthesis via DAP pathway; DL-2,6-diaminopimelate from LL-2,6-diaminopimelate: step 1/1. In terms of biological role, catalyzes the stereoinversion of LL-2,6-diaminopimelate (L,L-DAP) to meso-diaminopimelate (meso-DAP), a precursor of L-lysine and an essential component of the bacterial peptidoglycan. This chain is Diaminopimelate epimerase, found in Rhodospirillum centenum (strain ATCC 51521 / SW).